Reading from the N-terminus, the 483-residue chain is MASLLWGGDAGAAESERLNSHFSNLSQPRKNLWGIKSTAVRNIDGSINNINEDDEEDVVDLAANSLLNKLIHQSLVESSHRVEVLQKDPSSPLYSVKTFEELRLKEELLKGIYAMGFNRPSKIQEMALPMMLAHPPQNLIAQSQSGTGKTAAFVLAMLSRVNALELFPQCLCLAPTYELALQTGRVVEQMGKFCVDVQVMYAIRGNRIPRGTDITKQIIIGTPGTVLDWCFKLKLIDLTKIRVFVLDEADVMIDTQGFSDHSIRIQRALPSECQMLLFSATFEDSVWHFAERIIPDPNVIKLRKEELTLNNIRQYYVLCEHRKDKYQALCNIYGSITIGQAIIFCQTRRNAKWLTVEMIQDGHQVSLLSGELTVEQRASIIQRFRDGKEKVLITTNVCARGIDVKQVTIVVNFDLPVKQGEEPDYETYLHRIGRTGRFGKKGLAFNMIEVDELPSLMKIQDHFNSSIKQLNAEDMDEIEKIDY.

The Nuclear export signal signature appears at 61 to 74 (LAANSLLNKLIHQS). Positions 97–125 (KTFEELRLKEELLKGIYAMGFNRPSKIQE) match the Q motif motif. The short motif at 100–114 (EELRLKEELLKGIYA) is the Nuclear localization signal element. The 171-residue stretch at 130-300 (MMLAHPPQNL…ERIIPDPNVI (171 aa)) folds into the Helicase ATP-binding domain. Position 143 to 150 (143 to 150 (SQSGTGKT)) interacts with ATP. The DEAD box signature appears at 247-250 (DEAD). One can recognise a Helicase C-terminal domain in the interval 311 to 478 (NIRQYYVLCE…QLNAEDMDEI (168 aa)).

This sequence belongs to the DEAD box helicase family. In terms of processing, phosphorylated on threonine residues. The phosphorylated form is found in the cytoplasm but not in the nucleus. In terms of tissue distribution, highly expressed in the Leydig and germ cells of the testis and weakly expressed in the pituitary and hypothalamus.

The protein localises to the cytoplasm. The protein resides in the nucleus. The enzyme catalyses ATP + H2O = ADP + phosphate + H(+). Functionally, ATP-dependent RNA helicase. Required for mRNA export and translation regulation during spermatid development. The protein is ATP-dependent RNA helicase DDX25 (DDX25) of Homo sapiens (Human).